A 366-amino-acid polypeptide reads, in one-letter code: 3-beta-hydroxysteroid dehydrogenase (366 aa).

Residue Tyr154 is the Proton donor of the active site.

It belongs to the 3-beta-HSD family.

It carries out the reaction testosterone + NAD(+) = androst-4-ene-3,17-dione + NADH + H(+). It catalyses the reaction testosterone + NADP(+) = androst-4-ene-3,17-dione + NADPH + H(+). Functionally, catalyzes the degradation of testosterone into androstenedione. The chain is 3-beta-hydroxysteroid dehydrogenase from Mycolicibacterium neoaurum (Mycobacterium neoaurum).